The chain runs to 1305 residues: DNA-directed DNA polymerase (1305 aa).

Belongs to the DNA polymerase type-C family.

The catalysed reaction is DNA(n) + a 2'-deoxyribonucleoside 5'-triphosphate = DNA(n+1) + diphosphate. In terms of biological role, replicates viral genomic DNA. In Bacillus pumilus (Bacillus mesentericus), this protein is DNA-directed DNA polymerase.